Here is an 867-residue protein sequence, read N- to C-terminus: 2-methylcitrate dehydratase (2-methyl-trans-aconitate forming) (867 aa).

[4Fe-4S] cluster contacts are provided by Cys-410, Cys-476, and Cys-479.

The protein belongs to the aconitase/IPM isomerase family. The cofactor is [4Fe-4S] cluster.

The catalysed reaction is (2S,3S)-2-methylcitrate = 2-methyl-trans-aconitate + H2O. It catalyses the reaction citrate = D-threo-isocitrate. Its pathway is organic acid metabolism; propanoate degradation. Inhibited by ferricyanide and EDTA. Functionally, involved in the catabolism of short chain fatty acids (SCFA) via the 2-methylcitrate cycle II (propionate degradation route). In vivo under anaerobic conditions, AcnD catalyzes the stereospecific dehydration of (2S,3S)-methylcitrate (2-MC) to yield the trans isomer of 2-methyl-aconitate (2-MCA). AcnD can also accept citrate and cis-aconitate, but with a lower efficiency. 2-methylisocitrate and isocitrate are not substrates. This Shewanella oneidensis (strain ATCC 700550 / JCM 31522 / CIP 106686 / LMG 19005 / NCIMB 14063 / MR-1) protein is 2-methylcitrate dehydratase (2-methyl-trans-aconitate forming) (acnD).